The chain runs to 373 residues: MPDITLILLGAGNSTRFESDVKKQWLYSGEIPLWLHVAESFEAMGAFAKIVIVSSPEDIGLMKHFADYTYVQGGETRQASLKNALEDVTTEYVLVSDIARCCVPAAMIHRILDAREEASCIVPVLPVTDTLYLAQTPLDREQVRIIQTPQLSVTKTLKQALQTDQLFTDDSSAVASMGKKVHFVEGSHEAHKLTTISDLKKLPCIEAPSGKTLTGFGLDIHPFEEGKAMVLCGVKIAVDYGFKAHSDGDVAIHALIDALLGAAGMGDIGELYPDTDQSYAGANSTRLLSDTVRKIRTHGYTIGNVDMTILAQAPRLLPYKEKMKHSIASLLEIRPHLVNIKATTAEKLGFVGRKEGVTVHAVANLTYYNWKQK.

The tract at residues 1-212 (MPDITLILLG…PCIEAPSGKT (212 aa)) is 2-C-methyl-D-erythritol 4-phosphate cytidylyltransferase. Positions 213-373 (LTGFGLDIHP…NLTYYNWKQK (161 aa)) are 2-C-methyl-D-erythritol 2,4-cyclodiphosphate synthase. Asp-219 and His-221 together coordinate a divalent metal cation. Residues 219-221 (DIH) and 245-246 (HS) contribute to the 4-CDP-2-C-methyl-D-erythritol 2-phosphate site. Position 253 (His-253) interacts with a divalent metal cation. Residues 267–269 (DIG), 272–276 (YPDTD), 343–346 (TTAE), Phe-350, and Arg-353 each bind 4-CDP-2-C-methyl-D-erythritol 2-phosphate.

In the N-terminal section; belongs to the IspD/TarI cytidylyltransferase family. IspD subfamily. This sequence in the C-terminal section; belongs to the IspF family. Requires a divalent metal cation as cofactor.

It carries out the reaction 2-C-methyl-D-erythritol 4-phosphate + CTP + H(+) = 4-CDP-2-C-methyl-D-erythritol + diphosphate. The enzyme catalyses 4-CDP-2-C-methyl-D-erythritol 2-phosphate = 2-C-methyl-D-erythritol 2,4-cyclic diphosphate + CMP. Its pathway is isoprenoid biosynthesis; isopentenyl diphosphate biosynthesis via DXP pathway; isopentenyl diphosphate from 1-deoxy-D-xylulose 5-phosphate: step 2/6. It functions in the pathway isoprenoid biosynthesis; isopentenyl diphosphate biosynthesis via DXP pathway; isopentenyl diphosphate from 1-deoxy-D-xylulose 5-phosphate: step 4/6. Bifunctional enzyme that catalyzes the formation of 4-diphosphocytidyl-2-C-methyl-D-erythritol from CTP and 2-C-methyl-D-erythritol 4-phosphate (MEP) (IspD), and catalyzes the conversion of 4-diphosphocytidyl-2-C-methyl-D-erythritol 2-phosphate (CDP-ME2P) to 2-C-methyl-D-erythritol 2,4-cyclodiphosphate (ME-CPP) with a corresponding release of cytidine 5-monophosphate (CMP) (IspF). In Sulfurovum sp. (strain NBC37-1), this protein is Bifunctional enzyme IspD/IspF.